Reading from the N-terminus, the 132-residue chain is Large-conductance mechanosensitive channel (132 aa).

Transmembrane regions (helical) follow at residues 11 to 31 (FISR…GAFG) and 75 to 95 (GSFL…FLLV).

It belongs to the MscL family. Homopentamer.

The protein localises to the cell inner membrane. In terms of biological role, channel that opens in response to stretch forces in the membrane lipid bilayer. May participate in the regulation of osmotic pressure changes within the cell. The chain is Large-conductance mechanosensitive channel from Synechococcus sp. (strain JA-3-3Ab) (Cyanobacteria bacterium Yellowstone A-Prime).